Reading from the N-terminus, the 711-residue chain is Acyl-CoA dehydrogenase FadE34 (711 aa).

This sequence belongs to the acyl-CoA dehydrogenase family. As to quaternary structure, homodimer. FAD is required as a cofactor.

It carries out the reaction 3-oxochol-4-en-24-oyl-CoA + A = (22E)-3-oxochola-4,22-dien-24-oyl-CoA + AH2. The enzyme catalyses 3beta-hydroxy-chol-5-ene-24-oyl-CoA + A = 3beta-hydroxy-chol-5,22-dien-24-oyl-CoA + AH2. It participates in steroid metabolism; cholesterol degradation. In terms of biological role, involved in the second cycle of side chain dehydrogenation in the beta-oxidation of cholesterol catabolism. It contributes partly to the virulence by increasing the efficiency of beta-oxidation. Catalyzes the dehydrogenation of the five-carbon steroid side chain of 3-oxo-chol-4-en-24-oyl-CoA (3-OCO-CoA) to yield 3-oxochol-4,22-dien-24-oyl-CoA. Can also use 3beta-hydroxy-chol-5-ene-24-oyl-CoA, and shows weak activity with cholyl-CoA and deoxycholyl-CoA. This Mycobacterium tuberculosis (strain ATCC 25618 / H37Rv) protein is Acyl-CoA dehydrogenase FadE34 (fadE34).